The following is a 722-amino-acid chain: DUF724 domain-containing protein 7 (722 aa).

The tract at residues 424–449 (KTTPKKKLQAMKNQKSSTNDSVGEKV) is disordered. Positions 434-444 (MKNQKSSTNDS) are enriched in polar residues. One can recognise a DUF724 domain in the interval 540–720 (VLPFVKKSQL…HEFQAILAAP (181 aa)). The stretch at 645–712 (CALEELKAVE…DQEVQNVDHE (68 aa)) forms a coiled coil.

Homodimer. Interacts wtih ABAP1, ARIA and LHP1. Interacts with the non-modified histones H1, H2B, H3 and H4. In terms of tissue distribution, expressed in roots, leaves, stems and flowers.

It localises to the nucleus. In terms of biological role, may act as a link between DNA replication, transcription and chromatin remodeling during flower development. May participate in the repression of LHP1-targeted genes during flower development by direct interaction with LHP1. May be involved in the polar growth of plant cells via transportation of RNAs. The chain is DUF724 domain-containing protein 7 from Arabidopsis thaliana (Mouse-ear cress).